Here is a 185-residue protein sequence, read N- to C-terminus: Ribosome-recycling factor (185 aa).

Residues 144–164 (KEGEAGEDEVGRAEKDLDKTT) are disordered.

This sequence belongs to the RRF family.

The protein resides in the cytoplasm. In terms of biological role, responsible for the release of ribosomes from messenger RNA at the termination of protein biosynthesis. May increase the efficiency of translation by recycling ribosomes from one round of translation to another. The sequence is that of Ribosome-recycling factor from Mycobacterium tuberculosis (strain CDC 1551 / Oshkosh).